The primary structure comprises 156 residues: Small ribosomal subunit protein uS7 (156 aa).

The protein belongs to the universal ribosomal protein uS7 family. As to quaternary structure, part of the 30S ribosomal subunit. Contacts proteins S9 and S11.

Functionally, one of the primary rRNA binding proteins, it binds directly to 16S rRNA where it nucleates assembly of the head domain of the 30S subunit. Is located at the subunit interface close to the decoding center, probably blocks exit of the E-site tRNA. This Frankia casuarinae (strain DSM 45818 / CECT 9043 / HFP020203 / CcI3) protein is Small ribosomal subunit protein uS7.